The primary structure comprises 82 residues: NAD(P)H-quinone oxidoreductase subunit O, organellar chromatophore (82 aa).

It belongs to the complex I NdhO subunit family. NDH-1 can be composed of about 15 different subunits; different subcomplexes with different compositions have been identified which probably have different functions.

The protein resides in the plastid. It localises to the organellar chromatophore thylakoid membrane. It carries out the reaction a plastoquinone + NADH + (n+1) H(+)(in) = a plastoquinol + NAD(+) + n H(+)(out). The enzyme catalyses a plastoquinone + NADPH + (n+1) H(+)(in) = a plastoquinol + NADP(+) + n H(+)(out). In terms of biological role, NDH-1 shuttles electrons from an unknown electron donor, via FMN and iron-sulfur (Fe-S) centers, to quinones in the respiratory and/or the photosynthetic chain. The immediate electron acceptor for the enzyme in this species is believed to be plastoquinone. Couples the redox reaction to proton translocation, and thus conserves the redox energy in a proton gradient. Cyanobacterial NDH-1 also plays a role in inorganic carbon-concentration. This is NAD(P)H-quinone oxidoreductase subunit O, organellar chromatophore from Paulinella chromatophora.